Consider the following 887-residue polypeptide: Amyloid-beta-like protein (887 aa).

The first 27 residues, 1–27, serve as a signal peptide directing secretion; that stretch reads MCAALRRNLLLRSLWVVLAIGTAQVQA. The Extracellular portion of the chain corresponds to 28-813; the sequence is ASPRWEPQIA…HAAKEGRNVY (786 aa). A GFLD subdomain region spans residues 30 to 133; that stretch reads PRWEPQIAVL…KPFRCLGPFQ (104 aa). The E1 domain maps to 30–199; that stretch reads PRWEPQIAVL…SGVEFVCCPK (170 aa). 6 disulfide bridges follow: Cys-40/Cys-70, Cys-81/Cys-128, Cys-106/Cys-116, Cys-143/Cys-197, Cys-154/Cys-184, and Cys-168/Cys-196. A cuBD subdomain region spans residues 141–199; that stretch reads EGCLFDHIHNASRCWPFVRWNQTGAAACQERGMQMRSFAMLLPCGISVFSGVEFVCCPK. N-linked (GlcNAc...) asparagine glycans are attached at residues Asn-150 and Asn-161. Disordered stretches follow at residues 225–365 and 377–396; these read NDEL…STPQ and NSGN…QPTS. N-linked (GlcNAc...) asparagine glycans are attached at residues Asn-237 and Asn-240. The span at 246-267 shows a compositional bias: acidic residues; that stretch reads NEDDLDDEDDLMGDDEEDDMVA. A compositionally biased stretch (low complexity) spans 268-292; the sequence is DEAATAGGSPNTGSSGDSNSGSLDD. Over residues 293 to 321 the composition is skewed to acidic residues; sequence INAEYDSGEEGDNYEEDGAGSESEAEVEA. Low complexity predominate over residues 329–352; sequence AKVVSLKSDSSSPSSAPVAPAPEK. The E2 domain maps to 395-597; it reads TSDPYFTHFD…AKIAQLMNDY (203 aa). Asn-574 is a glycosylation site (N-linked (GlcNAc...) asparagine). The tract at residues 675–743 is disordered; it reads KSQVAEQQSQ…TEYGEATVSS (69 aa). Over residues 681 to 699 the composition is skewed to low complexity; the sequence is QQSQPTQSSTQSQAQQQQQ. The chain crosses the membrane as a helical span at residues 814-834; sequence FTLSFAGIALMAAVFVGVAVA. Residues 835–887 are Cytoplasmic-facing; it reads KWRTSRSPHAQGFIEVDQNVTTHHPIVREEKIVPNMQINGYENPTYKYFEVKE. A YENPXY motif motif is present at residues 875–880; the sequence is YENPTY.

Belongs to the APP family. As to quaternary structure, interacts (via the intracellular domain, ICD) with APP-BP1. Expressed in postmitotic neurons in the central and peripheral nervous systems. Within the nervous system, transcripts are not observed in neuroblasts, newly generated neurons and at least one class of presumed glial cells.

It localises to the membrane. In terms of biological role, during development, plays a role in the regulation of the neddylation pathway. Appl and APP-BP1 interact antagonistically during development. In Drosophila melanogaster (Fruit fly), this protein is Amyloid-beta-like protein (Appl).